A 148-amino-acid polypeptide reads, in one-letter code: Large ribosomal subunit protein uL15 (148 aa).

A compositionally biased stretch (basic residues) spans 1-30 (MPSKLRKTRKLRGHVSHGHGRIGKHRKHPG). A disordered region spans residues 1-38 (MPSKLRKTRKLRGHVSHGHGRIGKHRKHPGGRGNAGGM).

This sequence belongs to the universal ribosomal protein uL15 family. As to quaternary structure, component of the large ribosomal subunit.

It is found in the cytoplasm. Functionally, component of the large ribosomal subunit. The ribosome is a large ribonucleoprotein complex responsible for the synthesis of proteins in the cell. This Xenopus laevis (African clawed frog) protein is Large ribosomal subunit protein uL15 (rpl27a).